A 216-amino-acid polypeptide reads, in one-letter code: Pyridoxine/pyridoxamine 5'-phosphate oxidase (216 aa).

Residues 12-15 (RREY) and lysine 70 each bind substrate. FMN contacts are provided by residues 65–70 (RVVLLK), 80–81 (YT), arginine 86, lysine 87, and glutamine 109. Substrate contacts are provided by tyrosine 127 and arginine 131. Residues 144–145 (QS) and tryptophan 189 each bind FMN. 195–197 (RLH) is a binding site for substrate. Arginine 199 serves as a coordination point for FMN.

This sequence belongs to the pyridoxamine 5'-phosphate oxidase family. In terms of assembly, homodimer. FMN serves as cofactor.

The enzyme catalyses pyridoxamine 5'-phosphate + O2 + H2O = pyridoxal 5'-phosphate + H2O2 + NH4(+). It catalyses the reaction pyridoxine 5'-phosphate + O2 = pyridoxal 5'-phosphate + H2O2. Its pathway is cofactor metabolism; pyridoxal 5'-phosphate salvage; pyridoxal 5'-phosphate from pyridoxamine 5'-phosphate: step 1/1. The protein operates within cofactor metabolism; pyridoxal 5'-phosphate salvage; pyridoxal 5'-phosphate from pyridoxine 5'-phosphate: step 1/1. In terms of biological role, catalyzes the oxidation of either pyridoxine 5'-phosphate (PNP) or pyridoxamine 5'-phosphate (PMP) into pyridoxal 5'-phosphate (PLP). In Blochmanniella pennsylvanica (strain BPEN), this protein is Pyridoxine/pyridoxamine 5'-phosphate oxidase.